A 451-amino-acid chain; its full sequence is uncharacterized protein (451 aa).

Disordered regions lie at residues 89 to 150 (PRLS…ISRY) and 164 to 222 (QVGE…KTFG). Residues 104–121 (QKPTISRESFVWESSASI) show a composition bias toward polar residues. The span at 137 to 147 (SSTPSIEPESI) shows a compositional bias: low complexity. Over residues 175–222 (RAADSENERRPSEVREAPESRRRRETSETGSDKSKAPPPIKEIKKTFG) the composition is skewed to basic and acidic residues. Residues 358 to 376 (LIGLMLFQTTIFIISKIIA) form a helical membrane-spanning segment. The tract at residues 401-451 (RNGSSSGFASGTSSPLVFIPRTKRPSLVPSEKKMRGPSVTRDLAAEQERDA) is disordered. Residues 403 to 414 (GSSSGFASGTSS) show a composition bias toward low complexity.

It belongs to the IIV-6 067R family.

The protein localises to the membrane. This is an uncharacterized protein from Invertebrate iridescent virus 3 (IIV-3).